The chain runs to 760 residues: Striatin-4 (760 aa).

The interval 1–65 (MMEERAAAAV…PTAGPEPLSL (65 aa)) is disordered. The span at 7–35 (AAAVASAASSCRPLGSGTAPNPTAAAPAS) shows a compositional bias: low complexity. Positions 43-54 (PVGKGGGGGGSP) are enriched in gly residues. S53 bears the Phosphoserine mark. Residues 69–136 (LHFIQHEWAR…QERAKYHKLK (68 aa)) adopt a coiled-coil conformation. The tract at residues 71-79 (FIQHEWARF) is caveolin-binding. The interval 165–182 (ENSPLVWKEGRQLLRQYL) is calmodulin-binding. Residues S206, S223, and S276 each carry the phosphoserine modification. Disordered regions lie at residues 210–233 (NGAG…SGGE) and 272–346 (EDED…PHEL). 2 stretches are compositionally biased toward acidic residues: residues 272 to 283 (EDEDSDEDDELD) and 302 to 317 (EMED…DAIN). The segment covering 332-346 (PDPRRCTSEGNPHEL) has biased composition (basic and acidic residues). WD repeat units follow at residues 443–482 (SHYD…TAKK), 496–535 (AHRG…MDPY), 549–588 (GHGD…PSCL), 595–635 (GEHG…ALLT), 642–681 (SGPA…SVHS), 684–723 (AHLD…CVQE), and 730–759 (KHEE…AKVF).

This sequence belongs to the WD repeat striatin family. Part of the core of STRIPAK complexes composed of PP2A catalytic and scaffolding subunits, the striatins (PP2A regulatory subunits), the striatin-associated proteins MOB4, STRIP1 and STRIP2, PDCD10 and members of the STE20 kinases, such as STK24 and STK26. Interacts with CTTNBP2NL. As to expression, mainly expressed in brain but is also expressed at low levels in the kidney.

It localises to the cytoplasm. Its subcellular location is the membrane. It is found in the cell projection. The protein resides in the dendritic spine. Calmodulin-binding scaffolding protein which is the center of the striatin-interacting phosphatase and kinase (STRIPAK) complexes. STRIPAK complexes have critical roles in protein (de)phosphorylation and are regulators of multiple signaling pathways including Hippo, MAPK, nuclear receptor and cytoskeleton remodeling. Different types of STRIPAK complexes are involved in a variety of biological processes such as cell growth, differentiation, apoptosis, metabolism and immune regulation. Key regulator of the expanded Hippo signaling pathway by interacting and allowing the inhibition of MAP4K kinases by the STRIPAK complex. This is Striatin-4 (Strn4) from Mus musculus (Mouse).